The following is a 212-amino-acid chain: uncharacterized protein (212 aa).

Positions 53, 74, and 97 each coordinate S-adenosyl-L-methionine.

Belongs to the methyltransferase superfamily. YrrT family.

Functionally, could be a S-adenosyl-L-methionine-dependent methyltransferase. This is an uncharacterized protein from Bacillus cereus (strain ATCC 10987 / NRS 248).